The primary structure comprises 1180 residues: Phosphatidylinositol 4-kinase (1180 aa).

In terms of domain architecture, PIK helical spans 1–206 (MNKISDTIII…SVYLHSPSTS (206 aa)). 5 disordered regions span residues 15–84 (NEDE…KHKE), 257–327 (ENDH…ENDN), 355–391 (TSPI…NNIN), 768–799 (TISN…IPHS), and 832–894 (AISP…SPFG). The segment covering 38 to 74 (NNNNNNILTNVNNNKNNTITSSGGSDSSSSSSNNNNN) has biased composition (low complexity). Basic residues predominate over residues 75–84 (KIKKSKKHKE). The segment covering 257–270 (ENDHHIENDPKKDI) has biased composition (basic and acidic residues). Composition is skewed to low complexity over residues 271–325 (NSNN…SGEN), 364–391 (NNNN…NNIN), 768–793 (TISN…PTLP), and 835–879 (PPSQ…SPTN). In terms of domain architecture, PI3K/PI4K catalytic spans 895-1164 (ESWQEKIERY…LISYSIDHFK (270 aa)). A G-loop region spans residues 901–907 (IERYKKI). A catalytic loop region spans residues 1030-1038 (QIKDRHNGN). An activation loop region spans residues 1049–1073 (HIDFGFILSNSPGNISFESAPFKLT).

It belongs to the PI3/PI4-kinase family. Type III PI4K subfamily.

The catalysed reaction is a 1,2-diacyl-sn-glycero-3-phospho-(1D-myo-inositol) + ATP = a 1,2-diacyl-sn-glycero-3-phospho-(1D-myo-inositol 4-phosphate) + ADP + H(+). Acts on phosphatidylinositol (PtdIns) in the first committed step in the production of the second messenger inositol-1,4,5,-trisphosphate. This is Phosphatidylinositol 4-kinase (pikD) from Dictyostelium discoideum (Social amoeba).